The primary structure comprises 476 residues: RuvB-like 1 (476 aa).

The interval methionine 1 to valine 23 is disordered. Glycine 89–threonine 96 contacts ATP.

It belongs to the RuvB family. Forms homohexameric rings. May form a dodecamer with ruvb-2 made of two stacked hexameric rings. As to expression, expressed in gonadal cells.

Its subcellular location is the cytoplasm. It is found in the nucleus. The enzyme catalyses ATP + H2O = ADP + phosphate + H(+). Possesses single-stranded DNA-stimulated ATPase and ATP dependent DNA helicase (3' to 5') activity suggesting a role in nuclear processes such as recombination and transcription. May participate in several chromatin remodeling complexes that mediate the ATP-dependent exchange of histones and remodel chromatin by shifting nucleosomes. Involvement in these complexes is likely required for transcriptional activation of selected genes and DNA repair in response to DNA damage. Involved in the Ce-Tor signaling pathway whereby it is required for the accumulation and localization of box C/D snoRNP to nucleoli to regulate ribosomal maturation and thus protein synthesis. Antagonizes the transcriptional activity of transcription factor pha-4, to control postembryonic development and adult longevity. Has a role in pharyngeal development. Has a role in gonadal development. The chain is RuvB-like 1 from Caenorhabditis elegans.